A 305-amino-acid chain; its full sequence is Ribosomal RNA small subunit methyltransferase H (305 aa).

Residues 47–49 (GGH), Asp-66, Phe-93, Asp-108, and Gln-115 contribute to the S-adenosyl-L-methionine site. Residues 279–305 (ADSNEKLNNPRSRSAKLRLAKKRNPNE) are disordered. Basic residues predominate over residues 291 to 305 (RSAKLRLAKKRNPNE).

Belongs to the methyltransferase superfamily. RsmH family.

The protein resides in the cytoplasm. It carries out the reaction cytidine(1402) in 16S rRNA + S-adenosyl-L-methionine = N(4)-methylcytidine(1402) in 16S rRNA + S-adenosyl-L-homocysteine + H(+). In terms of biological role, specifically methylates the N4 position of cytidine in position 1402 (C1402) of 16S rRNA. This Prochlorococcus marinus (strain SARG / CCMP1375 / SS120) protein is Ribosomal RNA small subunit methyltransferase H.